A 448-amino-acid chain; its full sequence is C4-dicarboxylate transport protein 2 (448 aa).

9 consecutive transmembrane segments (helical) span residues 13–33 (SLYV…HFSP), 49–69 (LIKM…IAGM), 81–101 (LALL…LIVV), 149–169 (AFAK…GFAL), 193–213 (IVGI…AFTI), 227–247 (LMGA…GIVS), 294–314 (VVGL…SIYL), 335–355 (ITLL…TGSG), and 357–377 (IVLA…LALI).

It belongs to the dicarboxylate/amino acid:cation symporter (DAACS) (TC 2.A.23) family.

It localises to the cell inner membrane. Functionally, responsible for the transport of dicarboxylates such as succinate, fumarate, and malate from the periplasm across the membrane. The polypeptide is C4-dicarboxylate transport protein 2 (Polaromonas naphthalenivorans (strain CJ2)).